The following is a 342-amino-acid chain: Phosphoribosylformylglycinamidine cyclo-ligase (342 aa).

This sequence belongs to the AIR synthase family.

It localises to the cytoplasm. The enzyme catalyses 2-formamido-N(1)-(5-O-phospho-beta-D-ribosyl)acetamidine + ATP = 5-amino-1-(5-phospho-beta-D-ribosyl)imidazole + ADP + phosphate + H(+). Its pathway is purine metabolism; IMP biosynthesis via de novo pathway; 5-amino-1-(5-phospho-D-ribosyl)imidazole from N(2)-formyl-N(1)-(5-phospho-D-ribosyl)glycinamide: step 2/2. This chain is Phosphoribosylformylglycinamidine cyclo-ligase, found in Staphylococcus aureus (strain MSSA476).